Reading from the N-terminus, the 457-residue chain is Adenylosuccinate synthetase isozyme 2 (457 aa).

GTP is bound by residues 40 to 46 (GDEGKGK) and 68 to 70 (GHT). D41 functions as the Proton acceptor in the catalytic mechanism. D41 and G68 together coordinate Mg(2+). Substrate is bound at residue D41. IMP contacts are provided by residues 41-44 (DEGK), 66-69 (NAGH), T163, R177, N256, T271, and R335. H69 functions as the Proton donor in the catalytic mechanism. Position 331-337 (331-337 (VTTGRKR)) interacts with substrate. Residues R337, 363–365 (KLD), and 445–448 (GVGK) contribute to the GTP site.

Belongs to the adenylosuccinate synthetase family. As to quaternary structure, homodimer. Requires Mg(2+) as cofactor.

The protein localises to the cytoplasm. It localises to the mitochondrion. The catalysed reaction is IMP + L-aspartate + GTP = N(6)-(1,2-dicarboxyethyl)-AMP + GDP + phosphate + 2 H(+). The protein operates within purine metabolism; AMP biosynthesis via de novo pathway; AMP from IMP: step 1/2. Its activity is regulated as follows. Inhibited competitively by AMP and IMP and non-competitively by fructose 1,6-bisphosphate. Functionally, plays an important role in the de novo pathway and in the salvage pathway of purine nucleotide biosynthesis. Catalyzes the first committed step in the biosynthesis of AMP from IMP. This Xenopus laevis (African clawed frog) protein is Adenylosuccinate synthetase isozyme 2 (adss2).